Here is a 540-residue protein sequence, read N- to C-terminus: 2,3-bisphosphoglycerate-independent phosphoglycerate mutase (540 aa).

Mn(2+) contacts are provided by D13 and S63. The active-site Phosphoserine intermediate is the S63. Residues H124, 154–155, R186, R192, 262–265, and K356 contribute to the substrate site; these read RD and RPDR. Mn(2+) contacts are provided by D423, H427, D464, H465, and H483.

The protein belongs to the BPG-independent phosphoglycerate mutase family. As to quaternary structure, monomer. Mn(2+) is required as a cofactor.

It carries out the reaction (2R)-2-phosphoglycerate = (2R)-3-phosphoglycerate. The protein operates within carbohydrate degradation; glycolysis; pyruvate from D-glyceraldehyde 3-phosphate: step 3/5. Catalyzes the interconversion of 2-phosphoglycerate and 3-phosphoglycerate. The polypeptide is 2,3-bisphosphoglycerate-independent phosphoglycerate mutase (Chloroflexus aurantiacus (strain ATCC 29366 / DSM 635 / J-10-fl)).